We begin with the raw amino-acid sequence, 523 residues long: Vanin-like protein 3 (523 aa).

The signal sequence occupies residues 1-19 (MAVFLRRFLWLISFTLVLT). One can recognise a CN hydrolase domain in the interval 29–298 (YIAGVVEYRP…RKLLLAKVPL (270 aa)). The N-linked (GlcNAc...) asparagine glycan is linked to N64. Residue E74 is the Proton acceptor of the active site. K167 functions as the Proton donor in the catalytic mechanism. 2 N-linked (GlcNAc...) asparagine glycosylation sites follow: N177 and N192. Catalysis depends on C200, which acts as the Nucleophile. N-linked (GlcNAc...) asparagine glycans are attached at residues N330 and N468. N498 is lipidated: GPI-anchor amidated asparagine. Positions 499-523 (GGAGRLGTLLFLLITPLIMMHLFRE) are cleaved as a propeptide — removed in mature form.

The protein belongs to the carbon-nitrogen hydrolase superfamily. BTD/VNN family. In terms of tissue distribution, expressed in third instar larvae.

It is found in the cell membrane. In Drosophila melanogaster (Fruit fly), this protein is Vanin-like protein 3.